The following is a 431-amino-acid chain: GTPase Obg (431 aa).

Residues 1–158 (MFVDQVKINV…REIRLELKVL (158 aa)) form the Obg domain. The disordered stretch occupies residues 125-145 (GNIHFASPKNPAPEIAENGEP). An OBG-type G domain is found at 159–335 (ADVGLVGFPS…LLQRTADMLA (177 aa)). GTP contacts are provided by residues 165–172 (GFPSVGKS), 190–194 (FTTLV), 212–215 (DLPG), 282–285 (NKMD), and 316–318 (SAL). 2 residues coordinate Mg(2+): Ser172 and Thr192. The 79-residue stretch at 353–431 (YNFQPEAEFT…IDDFTFEYMA (79 aa)) folds into the OCT domain.

It belongs to the TRAFAC class OBG-HflX-like GTPase superfamily. OBG GTPase family. Monomer. Mg(2+) serves as cofactor.

Its subcellular location is the cytoplasm. Functionally, an essential GTPase which binds GTP, GDP and possibly (p)ppGpp with moderate affinity, with high nucleotide exchange rates and a fairly low GTP hydrolysis rate. Plays a role in control of the cell cycle, stress response, ribosome biogenesis and in those bacteria that undergo differentiation, in morphogenesis control. The protein is GTPase Obg of Levilactobacillus brevis (strain ATCC 367 / BCRC 12310 / CIP 105137 / JCM 1170 / LMG 11437 / NCIMB 947 / NCTC 947) (Lactobacillus brevis).